Reading from the N-terminus, the 338-residue chain is Phytanoyl-CoA dioxygenase, peroxisomal (338 aa).

Residues M1–T30 constitute a peroxisome transit peptide. An N6-succinyllysine mark is found at K59 and K108. 2-oxoglutarate contacts are provided by residues K120, M157, H175–D177, and W193. The Fe cation site is built by H175 and D177. An N6-succinyllysine mark is found at K231 and K252. A Fe cation-binding site is contributed by H264. 2 residues coordinate 2-oxoglutarate: S266 and R275. Phosphoserine is present on S317.

This sequence belongs to the PhyH family. As to quaternary structure, interacts with FKBP52. Interacts with PHYHIP. Requires Fe cation as cofactor. It depends on L-ascorbate as a cofactor. ATP serves as cofactor. Mg(2+) is required as a cofactor. Expressed in liver, kidney, and T-cells, but not in spleen, brain, heart, lung and skeletal muscle.

It is found in the peroxisome. It carries out the reaction phytanoyl-CoA + 2-oxoglutarate + O2 = 2-hydroxyphytanoyl-CoA + succinate + CO2. It catalyses the reaction 3-methylhexadecanoyl-CoA + 2-oxoglutarate + O2 = 2-hydroxy-3-methylhexadecanoyl-CoA + succinate + CO2. The enzyme catalyses hexadecanoyl-CoA + 2-oxoglutarate + O2 = 2-hydroxyhexadecanoyl-CoA + succinate + CO2. The catalysed reaction is octanoyl-CoA + 2-oxoglutarate + O2 = 2-hydroxyoctanoyl-CoA + succinate + CO2. It carries out the reaction decanoyl-CoA + 2-oxoglutarate + O2 = 2-hydroxydecanoyl-CoA + succinate + CO2. It catalyses the reaction 3-methylbutanoyl-CoA + 2-oxoglutarate + O2 = 2-hydroxy-3-methylbutanoyl-CoA + succinate + CO2. The enzyme catalyses heptadecanoyl-CoA + 2-oxoglutarate + O2 = 2-hydroxyheptadecanoyl-CoA + succinate + CO2. The catalysed reaction is eicosanoyl-CoA + 2-oxoglutarate + O2 = 2-hydroxyeicosanoyl-CoA + succinate + CO2. It carries out the reaction octadecanoyl-CoA + 2-oxoglutarate + O2 = 2-hydroxyoctadecanoyl-CoA + succinate + CO2. It catalyses the reaction dodecanoyl-CoA + 2-oxoglutarate + O2 = 2-hydroxydodecanoyl-CoA + succinate + CO2. The enzyme catalyses tetradecanoyl-CoA + 2-oxoglutarate + O2 = 2-hydroxytetradecanoyl-CoA + succinate + CO2. The catalysed reaction is hexanoyl-CoA + 2-oxoglutarate + O2 = 2-hydroxyhexanoyl-CoA + succinate + CO2. It carries out the reaction butanoyl-CoA + 2-oxoglutarate + O2 = 2-hydroxybutanoyl-CoA + succinate + CO2. It catalyses the reaction 3-methylnonanoyl-CoA + 2-oxoglutarate + O2 = 2-hydroxy-3-methylnonanoyl-CoA + succinate + CO2. The enzyme catalyses 3-methylundecanoyl-CoA + 2-oxoglutarate + O2 = 2-hydroxy-3-methylundecanoyl-CoA + succinate + CO2. The catalysed reaction is 3-methyldodecanoyl-CoA + 2-oxoglutarate + O2 = 2-hydroxy-3-methyldodecanoyl-CoA + succinate + CO2. It participates in lipid metabolism; fatty acid metabolism. Catalyzes the 2-hydroxylation of not only racemic phytanoyl-CoA and the isomers of 3-methylhexadecanoyl-CoA, but also a variety of other mono-branched 3-methylacyl-CoA esters (with a chain length of at least seven carbon atoms) and straight-chain acyl-CoA esters (with a chain length longer than four carbon atoms). Does not hydroxylate long and very long straight chain acyl-CoAs or 2-methyl- and 4-methyl-branched acyl-CoAs. The protein is Phytanoyl-CoA dioxygenase, peroxisomal (PHYH) of Homo sapiens (Human).